Reading from the N-terminus, the 177-residue chain is Putative membrane protein 165 (177 aa).

The Intravirion portion of the chain corresponds to 1 to 7 (MYLVLLI). The chain crosses the membrane as a helical span at residues 8 to 24 (AVILFIIVILMIFLISG). Residues 25–166 (LFYPEQEPAL…DPHPALKSKN (142 aa)) lie on the Virion surface side of the membrane.

It belongs to the asfivirus envelope protein p22 family.

The protein localises to the virion membrane. The protein resides in the host cell membrane. In African swine fever virus (isolate Pig/Kenya/KEN-50/1950) (ASFV), this protein is Putative membrane protein 165.